The sequence spans 202 residues: Protein-methionine-sulfoxide reductase heme-binding subunit MsrQ (202 aa).

6 consecutive transmembrane segments (helical) span residues L8–F28, L42–L62, L75–L95, P110–N130, L147–L167, and E169–A189.

Belongs to the MsrQ family. Heterodimer of a catalytic subunit (MsrP) and a heme-binding subunit (MsrQ). The cofactor is FMN. It depends on heme b as a cofactor.

It is found in the cell inner membrane. In terms of biological role, part of the MsrPQ system that repairs oxidized periplasmic proteins containing methionine sulfoxide residues (Met-O), using respiratory chain electrons. Thus protects these proteins from oxidative-stress damage caused by reactive species of oxygen and chlorine generated by the host defense mechanisms. MsrPQ is essential for the maintenance of envelope integrity under bleach stress, rescuing a wide series of structurally unrelated periplasmic proteins from methionine oxidation. MsrQ provides electrons for reduction to the reductase catalytic subunit MsrP, using the quinone pool of the respiratory chain. The chain is Protein-methionine-sulfoxide reductase heme-binding subunit MsrQ from Pseudomonas aeruginosa (strain ATCC 15692 / DSM 22644 / CIP 104116 / JCM 14847 / LMG 12228 / 1C / PRS 101 / PAO1).